We begin with the raw amino-acid sequence, 399 residues long: Acetate kinase (399 aa).

Asn-10 is a binding site for Mg(2+). Position 17 (Lys-17) interacts with ATP. Arg-91 is a substrate binding site. Asp-150 (proton donor/acceptor) is an active-site residue. Residues His-210 to Gly-214, Asp-285 to Arg-287, and Gly-333 to Asn-337 contribute to the ATP site. Residue Glu-387 participates in Mg(2+) binding.

It belongs to the acetokinase family. Homodimer. Mg(2+) serves as cofactor. The cofactor is Mn(2+).

The protein resides in the cytoplasm. The enzyme catalyses acetate + ATP = acetyl phosphate + ADP. The protein operates within metabolic intermediate biosynthesis; acetyl-CoA biosynthesis; acetyl-CoA from acetate: step 1/2. Catalyzes the formation of acetyl phosphate from acetate and ATP. Can also catalyze the reverse reaction. This is Acetate kinase from Wigglesworthia glossinidia brevipalpis.